The following is a 181-amino-acid chain: RNA pyrophosphohydrolase (181 aa).

The region spanning 6-150 (GYRPNVGIII…KCEVYRCALK (145 aa)) is the Nudix hydrolase domain. The Nudix box signature appears at 38–59 (GGIKEGETPEQAMYRELYEEVG).

The protein belongs to the Nudix hydrolase family. RppH subfamily. A divalent metal cation serves as cofactor.

Functionally, accelerates the degradation of transcripts by removing pyrophosphate from the 5'-end of triphosphorylated RNA, leading to a more labile monophosphorylated state that can stimulate subsequent ribonuclease cleavage. The chain is RNA pyrophosphohydrolase from Psychromonas ingrahamii (strain DSM 17664 / CCUG 51855 / 37).